We begin with the raw amino-acid sequence, 155 residues long: Ribosome maturation factor RimP (155 aa).

It belongs to the RimP family.

It is found in the cytoplasm. Functionally, required for maturation of 30S ribosomal subunits. In Prochlorococcus marinus (strain MIT 9211), this protein is Ribosome maturation factor RimP.